A 269-amino-acid chain; its full sequence is Integral membrane protein 2C (269 aa).

The residue at position 39 (Thr39) is a Phosphothreonine. A helical; Signal-anchor for type II membrane protein transmembrane segment spans residues 57–77; the sequence is VGGVCYLSMGMVVLLMGLVFA. The BRICHOS domain maps to 138–232; it reads FGGGDPADII…LCNGKDTYRL (95 aa). Residues Cys165 and Cys224 are joined by a disulfide bond. N-linked (GlcNAc...) asparagine glycosylation is present at Asn171.

Belongs to the ITM2 family. Interacts with BACE1. Interacts with APP. Interacts with STMN2. In terms of processing, type I membrane-bound, as well as soluble, furin has a pre-eminent role in ITM2C proteolytic processing. PCSK7 and PCSK5 may also be involved although to a lesser extent. The soluble form of PCSK7 is incapable of processing ITM2C. Fails to undergo shedding by ADAM10 and intramembrane cleavage by SPPL2B.

It is found in the lysosome membrane. The protein resides in the cell membrane. Functionally, negative regulator of amyloid-beta peptide production. May inhibit the processing of APP by blocking its access to alpha- and beta-secretase. Binding to the beta-secretase-cleaved APP C-terminal fragment is negligible, suggesting that ITM2C is a poor gamma-secretase cleavage inhibitor. May play a role in TNF-induced cell death and neuronal differentiation. In Sus scrofa (Pig), this protein is Integral membrane protein 2C (ITM2C).